The primary structure comprises 510 residues: Nectin-4 (510 aa).

The first 31 residues, 1–31, serve as a signal peptide directing secretion; it reads MPLSLGAEMWGPEAWLLLLLLLASFTGRCPA. Residues 32-144 form the Ig-like V-type domain; the sequence is GELETSDVVT…GSFQARLRLR (113 aa). Residues 32-349 are Extracellular-facing; it reads GELETSDVVT…GKQVDLVSAS (318 aa). 3 cysteine pairs are disulfide-bonded: Cys52/Cys127, Cys171/Cys223, and Cys270/Cys315. Ig-like C2-type domains lie at 148 to 237 and 248 to 331; these read PPLP…QRIT and ASVR…VTVD. Asn281 is a glycosylation site (N-linked (GlcNAc...) asparagine). Residues 350-370 form a helical membrane-spanning segment; sequence VVVVGVIAALLFCLLVVVVVL. The Cytoplasmic segment spans residues 371–510; sequence MSRYHRRKAQ…IYINGRGHLV (140 aa). Positions 399-412 are enriched in basic and acidic residues; sequence RRLHSHHTDPRSQP. Disordered regions lie at residues 399–447 and 457–476; these read RRLH…SYST and QTELLSPGSGRAEEEEDQDE.

The protein belongs to the nectin family. Self-associates. Interacts via its Ig-like V-type domain with NECTIN1 Ig-like V-type domain. Interacts via its C-terminus with AFDN. As to quaternary structure, (Microbial infection) Interacts (via N-terminus) with measles virus hemagglutinin protein. Post-translationally, the soluble form is produced by proteolytic cleavage at the cell surface (shedding), probably by ADAM17/TACE. Predominantly expressed in placenta. Not detected in normal breast epithelium but expressed in breast carcinoma.

It is found in the cell membrane. It localises to the cell junction. The protein resides in the adherens junction. Its subcellular location is the secreted. Seems to be involved in cell adhesion through trans-homophilic and -heterophilic interactions, the latter including specifically interactions with NECTIN1. Does not act as receptor for alpha-herpesvirus entry into cells. Functionally, (Microbial infection) Acts as a receptor for measles virus. This is Nectin-4 from Homo sapiens (Human).